A 187-amino-acid polypeptide reads, in one-letter code: Large ribosomal subunit protein uL6 (187 aa).

Belongs to the universal ribosomal protein uL6 family. As to quaternary structure, part of the 50S ribosomal subunit.

Functionally, this protein binds to the 23S rRNA, and is important in its secondary structure. It is located near the subunit interface in the base of the L7/L12 stalk, and near the tRNA binding site of the peptidyltransferase center. The protein is Large ribosomal subunit protein uL6 of Roseiflexus castenholzii (strain DSM 13941 / HLO8).